The primary structure comprises 446 residues: B3 domain-containing protein REM12 (446 aa).

The tract at residues 1–46 (MVLNSSDLGPSRCDIRDLPAPSSTNDQGKTELARKKKVKRSNTEIE) is disordered. 2 DNA-binding regions (TF-B3) span residues 56–153 (CFVA…FCST) and 193–289 (FMTL…VNTQ). The disordered stretch occupies residues 295–334 (SQQGECSRDSEKESSICAEPSRGNKKWKATNNRKERRDSS). The TF-B3 3 DNA-binding region spans 341 to 435 (YVTLTLTPED…TTPVFKFCSN (95 aa)).

The protein localises to the nucleus. This chain is B3 domain-containing protein REM12 (REM12), found in Arabidopsis thaliana (Mouse-ear cress).